A 61-amino-acid chain; its full sequence is MAKDFINGKRTQFGNKRSHALNSSRRSWKPNLQKVTILVNGKPKKVYVSARTLKSGKVTRV.

Positions 1-26 (MAKDFINGKRTQFGNKRSHALNSSRR) are disordered. Polar residues predominate over residues 9–25 (KRTQFGNKRSHALNSSR).

It belongs to the bacterial ribosomal protein bL28 family.

The chain is Large ribosomal subunit protein bL28 from Limosilactobacillus reuteri (strain DSM 20016) (Lactobacillus reuteri).